The following is a 400-amino-acid chain: Large envelope protein (400 aa).

Met-1 carries the post-translational modification N-acetylmethionine. Residue Gly-2 is the site of N-myristoyl glycine; by host attachment. A pre-S1 region spans residues 2 to 119 (GAPLSTTRRG…PPLRDTHPQA (118 aa)). The interval 2–174 (GAPLSTTRRG…FSKTGGPAMN (173 aa)) is pre-S. The Virion surface; in external conformation segment spans residues 2-181 (GAPLSTTRRG…AMNMDNITSG (180 aa)). Residues 2–253 (GAPLSTTRRG…PGYRWMCLRR (252 aa)) lie on the Intravirion; in internal conformation side of the membrane. Pro-4 is a glycosylation site (N-linked (GlcNAc...) asparagine). Residues 84–117 (VLTTLPADPPPASTNRRSGRKPTPVSPPLRDTHP) are disordered. The interval 120 to 174 (MQWNSTQFHQALLDPRVRALYFPAGGSSSGTQNPAPTIASLTSSIFSKTGGPAMN) is pre-S2. The helical transmembrane segment at 182–202 (LLGPLLVLQAVCFLLTKILTI) threads the bilayer. Topologically, residues 203-253 (PQSLDSWWTSLNFLGGLPGCPGQNSQSPTSNHLPTSCPPTCPGYRWMCLRR) are intravirion; in external conformation. The helical transmembrane segment at 254–274 (FIIFLFILLLCLIFLLVLLDY) threads the bilayer. Topologically, residues 275–348 (QGMLPVCPLL…WASARFSWLS (74 aa)) are virion surface. A glycan (N-linked (GlcNAc...) asparagine; by host) is linked at Asn-320. The helical transmembrane segment at 349–369 (LLVQFVQWCVGLSPTVWLLVI) threads the bilayer. At 370–375 (WMIWYW) the chain is on the intravirion side. A helical transmembrane segment spans residues 376–398 (GPNLCSILSPFIPLLPIFCYLWV). The Virion surface segment spans residues 399-400 (SI).

This sequence belongs to the orthohepadnavirus major surface antigen family. In its internal form (Li-HBsAg), interacts with the capsid protein and with the isoform S. Interacts with host chaperone CANX. As to quaternary structure, associates with host chaperone CANX through its pre-S2 N glycan; this association may be essential for isoform M proper secretion. In terms of assembly, interacts with isoform L. Interacts with the antigens of satellite virus HDV (HDVAgs); this interaction is required for encapsidation of HDV genomic RNA. Isoform M is N-terminally acetylated by host at a ratio of 90%, and N-glycosylated by host at the pre-S2 region. In terms of processing, myristoylated.

The protein localises to the virion membrane. In terms of biological role, the large envelope protein exists in two topological conformations, one which is termed 'external' or Le-HBsAg and the other 'internal' or Li-HBsAg. In its external conformation the protein attaches the virus to cell receptors and thereby initiating infection. This interaction determines the species specificity and liver tropism. This attachment induces virion internalization predominantly through caveolin-mediated endocytosis. The large envelope protein also assures fusion between virion membrane and endosomal membrane. In its internal conformation the protein plays a role in virion morphogenesis and mediates the contact with the nucleocapsid like a matrix protein. The middle envelope protein plays an important role in the budding of the virion. It is involved in the induction of budding in a nucleocapsid independent way. In this process the majority of envelope proteins bud to form subviral lipoprotein particles of 22 nm of diameter that do not contain a nucleocapsid. The chain is Large envelope protein from Hepatitis B virus genotype F2 (isolate Brazil/w4B) (HBV-F).